The primary structure comprises 93 residues: Pyrimidine/purine nucleoside phosphorylase (93 aa).

The protein belongs to the nucleoside phosphorylase PpnP family.

It carries out the reaction a purine D-ribonucleoside + phosphate = a purine nucleobase + alpha-D-ribose 1-phosphate. It catalyses the reaction adenosine + phosphate = alpha-D-ribose 1-phosphate + adenine. The catalysed reaction is cytidine + phosphate = cytosine + alpha-D-ribose 1-phosphate. The enzyme catalyses guanosine + phosphate = alpha-D-ribose 1-phosphate + guanine. It carries out the reaction inosine + phosphate = alpha-D-ribose 1-phosphate + hypoxanthine. It catalyses the reaction thymidine + phosphate = 2-deoxy-alpha-D-ribose 1-phosphate + thymine. The catalysed reaction is uridine + phosphate = alpha-D-ribose 1-phosphate + uracil. The enzyme catalyses xanthosine + phosphate = alpha-D-ribose 1-phosphate + xanthine. Functionally, catalyzes the phosphorolysis of diverse nucleosides, yielding D-ribose 1-phosphate and the respective free bases. Can use uridine, adenosine, guanosine, cytidine, thymidine, inosine and xanthosine as substrates. Also catalyzes the reverse reactions. The sequence is that of Pyrimidine/purine nucleoside phosphorylase from Pseudoalteromonas atlantica (strain T6c / ATCC BAA-1087).